A 675-amino-acid chain; its full sequence is Methionine--tRNA ligase (675 aa).

Residues 12–22 (PYANGPIHLGH) carry the 'HIGH' region motif. The Zn(2+) site is built by Cys143, Cys146, Cys156, and Cys159. The 'KMSKS' region signature appears at 328-332 (KMSKS). Lys331 lines the ATP pocket. In terms of domain architecture, tRNA-binding spans 574-675 (DFAKVDLRIA…QGAQPGMRVK (102 aa)).

This sequence belongs to the class-I aminoacyl-tRNA synthetase family. MetG type 1 subfamily. Homodimer. Zn(2+) serves as cofactor.

The protein resides in the cytoplasm. The enzyme catalyses tRNA(Met) + L-methionine + ATP = L-methionyl-tRNA(Met) + AMP + diphosphate. Is required not only for elongation of protein synthesis but also for the initiation of all mRNA translation through initiator tRNA(fMet) aminoacylation. In Alkalilimnicola ehrlichii (strain ATCC BAA-1101 / DSM 17681 / MLHE-1), this protein is Methionine--tRNA ligase.